A 527-amino-acid polypeptide reads, in one-letter code: Light-independent protochlorophyllide reductase subunit B (527 aa).

Position 36 (Asp36) interacts with [4Fe-4S] cluster. Asp292 functions as the Proton donor in the catalytic mechanism. A substrate-binding site is contributed by 428 to 429 (GL).

Belongs to the ChlB/BchB/BchZ family. In terms of assembly, protochlorophyllide reductase is composed of three subunits; BchL, BchN and BchB. Forms a heterotetramer of two BchB and two BchN subunits. [4Fe-4S] cluster serves as cofactor.

The catalysed reaction is chlorophyllide a + oxidized 2[4Fe-4S]-[ferredoxin] + 2 ADP + 2 phosphate = protochlorophyllide a + reduced 2[4Fe-4S]-[ferredoxin] + 2 ATP + 2 H2O. It functions in the pathway porphyrin-containing compound metabolism; bacteriochlorophyll biosynthesis (light-independent). Component of the dark-operative protochlorophyllide reductase (DPOR) that uses Mg-ATP and reduced ferredoxin to reduce ring D of protochlorophyllide (Pchlide) to form chlorophyllide a (Chlide). This reaction is light-independent. The NB-protein (BchN-BchB) is the catalytic component of the complex. This chain is Light-independent protochlorophyllide reductase subunit B, found in Chlorobium phaeovibrioides (strain DSM 265 / 1930) (Prosthecochloris vibrioformis (strain DSM 265)).